The primary structure comprises 657 residues: tRNA 5-methylaminomethyl-2-thiouridine biosynthesis bifunctional protein MnmC (657 aa).

The segment at 1–238 (MPASTLLQHA…KWEVMSGEYT (238 aa)) is tRNA (mnm(5)s(2)U34)-methyltransferase. The interval 265-657 (IGAGLAGSAS…FGLRRLIRGK (393 aa)) is FAD-dependent cmnm(5)s(2)U34 oxidoreductase.

This sequence in the N-terminal section; belongs to the methyltransferase superfamily. tRNA (mnm(5)s(2)U34)-methyltransferase family. It in the C-terminal section; belongs to the DAO family. FAD is required as a cofactor.

Its subcellular location is the cytoplasm. The catalysed reaction is 5-aminomethyl-2-thiouridine(34) in tRNA + S-adenosyl-L-methionine = 5-methylaminomethyl-2-thiouridine(34) in tRNA + S-adenosyl-L-homocysteine + H(+). Functionally, catalyzes the last two steps in the biosynthesis of 5-methylaminomethyl-2-thiouridine (mnm(5)s(2)U) at the wobble position (U34) in tRNA. Catalyzes the FAD-dependent demodification of cmnm(5)s(2)U34 to nm(5)s(2)U34, followed by the transfer of a methyl group from S-adenosyl-L-methionine to nm(5)s(2)U34, to form mnm(5)s(2)U34. In Pseudomonas putida (strain W619), this protein is tRNA 5-methylaminomethyl-2-thiouridine biosynthesis bifunctional protein MnmC.